The primary structure comprises 399 residues: MIIKPRVRGFICVTAHPAGCEANVKKQIDYVTTEGPIANGPKRVLVIGASTGYGLAARITAAFGCGADTLGVFFERPGEEGKPGTSGWYNSAAFHKFAAQKGLYAKSINGDAFSDEIKQLTIDAIKQDLGQVDQVIYSLASPRRTHPKTGEVFNSTLKPIGNAVNLRGLDTDKEVIKESVLQPATQSEIDSTVAVMGGEDWQMWIDALLDAGVLAEGAQTTAFTYLGEKITHDIYWNGSIGAAKKDLDQKVLAIRESLAAHGGGDARVSVLKAVVTQASSAIPMMPLYLSLLFKVMKEKGTHEGCIEQVYSLYKDSLCGDSPHMDQEGRLRADYKELDPEVQNQVQQLWDQVTNDNIYLLTDFVGYKSEFLNLFGFGIDGVDYDADVNPDVKIPNLIQG.

Residues 48-53 (GASTGY), 74-75 (FE), 111-112 (DA), and 139-140 (LA) contribute to the NAD(+) site. Tyr-225 contributes to the substrate binding site. Tyr-235 (proton donor) is an active-site residue. NAD(+)-binding positions include Lys-244 and 274 to 276 (VVT).

Belongs to the TER reductase family. In terms of assembly, monomer.

It carries out the reaction a 2,3-saturated acyl-[ACP] + NAD(+) = a (2E)-enoyl-[ACP] + NADH + H(+). Its pathway is lipid metabolism; fatty acid biosynthesis. Its function is as follows. Involved in the final reduction of the elongation cycle of fatty acid synthesis (FAS II). Catalyzes the reduction of a carbon-carbon double bond in an enoyl moiety that is covalently linked to an acyl carrier protein (ACP). In Yersinia pseudotuberculosis serotype O:1b (strain IP 31758), this protein is Enoyl-[acyl-carrier-protein] reductase [NADH].